The sequence spans 264 residues: Transmembrane protein 270 (264 aa).

Helical transmembrane passes span 31–51 (HLYR…LGLA), 74–94 (LSLA…LLLW), and 133–153 (LFLS…LLTW). A compositionally biased stretch (polar residues) spans 227–236 (AQEVKSQETS). Residues 227 to 264 (AQEVKSQETSGPPPQFLIPESSTTESGPLPPQPETPGE) are disordered. A compositionally biased stretch (pro residues) spans 254–264 (PLPPQPETPGE).

In terms of tissue distribution, testis.

The protein resides in the membrane. The polypeptide is Transmembrane protein 270 (Mus musculus (Mouse)).